We begin with the raw amino-acid sequence, 751 residues long: Ribosome biogenesis protein ERB1 (751 aa).

2 disordered regions span residues 1-140 and 289-336; these read MALT…GNVP and SEPS…DPED. Composition is skewed to acidic residues over residues 34–92 and 119–129; these read LTDE…SDSD and IEPDYDSDSST. Pro residues predominate over residues 294–305; that stretch reads SQPPPLPAPKRP. The span at 323-336 shows a compositional bias: basic and acidic residues; the sequence is EEEKQEWLKQDPED. WD repeat units follow at residues 410 to 449, 536 to 580, 582 to 621, 622 to 661, 665 to 704, and 720 to 751; these read HPKGRARCVSVSPDGAWAVSGDEDGVVSLWEVNVGCEIRR, PSSG…APFK, IKGAVQQVLFHPIKPHFFVATQQYVRLYNLAEQKLIKTLQ, PGIRWISSMDVHPSGDHVIVGGYDRKLCWFDLELSEKPYK, YHSRAIRSLHFHPTYPLFASSSDDGSIQIFHARVYNDLMT, and TDGLGILQVKWTPKHPWLLSAAADGTVAVWCS.

The protein belongs to the WD repeat BOP1/ERB1 family. In terms of assembly, component of the NOP7 complex, composed of ERB1, NOP7 and YTM1. The complex is held together by ERB1, which interacts with NOP7 via its N-terminal domain and with YTM1 via a high-affinity interaction between the seven-bladed beta-propeller domains of the 2 proteins. The NOP7 complex associates with the 66S pre-ribosome.

Its subcellular location is the nucleus. It localises to the nucleolus. The protein localises to the nucleoplasm. Its function is as follows. Component of the NOP7 complex, which is required for maturation of the 25S and 5.8S ribosomal RNAs and formation of the 60S ribosome. This Coprinopsis cinerea (strain Okayama-7 / 130 / ATCC MYA-4618 / FGSC 9003) (Inky cap fungus) protein is Ribosome biogenesis protein ERB1.